The following is a 305-amino-acid chain: Probable lipid kinase YegS-like (305 aa).

The 129-residue stretch at 1–129 folds into the DAGKc domain; it reads MTQRRAMLIL…VDLGEVGGKL (129 aa). ATP-binding positions include threonine 39, 65 to 71, and threonine 92; that span reads GDGTLRD. Mg(2+) contacts are provided by leucine 210, aspartate 213, and leucine 215. Glutamate 268 serves as the catalytic Proton acceptor.

The protein belongs to the diacylglycerol/lipid kinase family. YegS lipid kinase subfamily. It depends on Mg(2+) as a cofactor. Ca(2+) is required as a cofactor.

Its subcellular location is the cytoplasm. In terms of biological role, probably phosphorylates lipids; the in vivo substrate is unknown. This chain is Probable lipid kinase YegS-like, found in Pseudomonas syringae pv. syringae (strain B728a).